Reading from the N-terminus, the 120-residue chain is MTRQPHKQRNRQERAALHEKQKQVRAPLSPELREEYGQRNVRVNAGDTVEVQRGDFAGESGEVVTVDLRAAEIHVEDVTQETADGEEVPRPLEASNVQVTELDLEDEVREARLESEEDNE.

The segment at 1–33 (MTRQPHKQRNRQERAALHEKQKQVRAPLSPELR) is disordered. Over residues 10–22 (NRQERAALHEKQK) the composition is skewed to basic and acidic residues.

Belongs to the universal ribosomal protein uL24 family. Part of the 50S ribosomal subunit.

One of two assembly initiator proteins, it binds directly to the 5'-end of the 23S rRNA, where it nucleates assembly of the 50S subunit. Functionally, located at the polypeptide exit tunnel on the outside of the subunit. The sequence is that of Large ribosomal subunit protein uL24 from Natronomonas pharaonis (strain ATCC 35678 / DSM 2160 / CIP 103997 / JCM 8858 / NBRC 14720 / NCIMB 2260 / Gabara) (Halobacterium pharaonis).